The following is a 418-amino-acid chain: UPF0261 protein BMEII0128 (418 aa).

It belongs to the UPF0261 family.

The sequence is that of UPF0261 protein BMEII0128 from Brucella melitensis biotype 1 (strain ATCC 23456 / CCUG 17765 / NCTC 10094 / 16M).